Reading from the N-terminus, the 214-residue chain is MNYPHPIIAREGWPFIAIAAVIALLIHAIGGFGFAWPFWLLLVFVVQFFRDPQRPIPAQPNAVLCPADGRIVAVETSHDPYANREALKISVFMNVFNVHSQRSPVDGAISKVEYFPGAFLNAAIDKASTENERNAVVIQTASGKTVTAVQIAGLIARRILCYVRAGEPLSRGQRYGFIRFGSRVDVYLPLGSRAKVSIGEKVYASSTILAELEQ.

Residue serine 182 is the Schiff-base intermediate with substrate; via pyruvic acid of the active site. A Pyruvic acid (Ser); by autocatalysis modification is found at serine 182.

This sequence belongs to the phosphatidylserine decarboxylase family. PSD-A subfamily. As to quaternary structure, heterodimer of a large membrane-associated beta subunit and a small pyruvoyl-containing alpha subunit. It depends on pyruvate as a cofactor. In terms of processing, is synthesized initially as an inactive proenzyme. Formation of the active enzyme involves a self-maturation process in which the active site pyruvoyl group is generated from an internal serine residue via an autocatalytic post-translational modification. Two non-identical subunits are generated from the proenzyme in this reaction, and the pyruvate is formed at the N-terminus of the alpha chain, which is derived from the carboxyl end of the proenzyme. The post-translation cleavage follows an unusual pathway, termed non-hydrolytic serinolysis, in which the side chain hydroxyl group of the serine supplies its oxygen atom to form the C-terminus of the beta chain, while the remainder of the serine residue undergoes an oxidative deamination to produce ammonia and the pyruvoyl prosthetic group on the alpha chain.

The protein localises to the cell membrane. The enzyme catalyses a 1,2-diacyl-sn-glycero-3-phospho-L-serine + H(+) = a 1,2-diacyl-sn-glycero-3-phosphoethanolamine + CO2. It participates in phospholipid metabolism; phosphatidylethanolamine biosynthesis; phosphatidylethanolamine from CDP-diacylglycerol: step 2/2. In terms of biological role, catalyzes the formation of phosphatidylethanolamine (PtdEtn) from phosphatidylserine (PtdSer). The sequence is that of Phosphatidylserine decarboxylase proenzyme from Burkholderia vietnamiensis (strain G4 / LMG 22486) (Burkholderia cepacia (strain R1808)).